Reading from the N-terminus, the 481-residue chain is Protein FIZZY-RELATED 3 (481 aa).

The disordered stretch occupies residues 100–165; that stretch reads PAGGQGSASS…RKVPKTPHKV (66 aa). The span at 125–136 shows a compositional bias: low complexity; it reads SNSSPSSPFSPS. Basic residues predominate over residues 154-163; the sequence is PPRKVPKTPH. WD repeat units follow at residues 172 to 209, 213 to 252, 255 to 292, 296 to 335, 338 to 380, 382 to 423, and 426 to 465; these read QDDF…VTKL, GPND…RVRT, GHQT…DFVS, GHKS…PILK, EHTA…QLNS, DTGS…KVAT, and GHSM…KMQT.

This sequence belongs to the WD repeat CDC20/Fizzy family. As to quaternary structure, associates with the APC/C complex. Interacts with CDC20-1, CDC20-2, CYCA1-1, CYCA3-4, CYCB1-1 and CYCB1-2. Binds to GIG1 and PYM.

It functions in the pathway protein modification; protein ubiquitination. Activator protein that regulates the ubiquitin ligase activity and substrate specificity of the anaphase promoting complex/cyclosome (APC/C). The protein is Protein FIZZY-RELATED 3 (FZR3) of Arabidopsis thaliana (Mouse-ear cress).